Consider the following 389-residue polypeptide: Probable tRNA sulfurtransferase (389 aa).

Residues 57 to 165 (DEALDRLSKI…EDETYIYHRV (109 aa)) form the THUMP domain. ATP-binding positions include 183–184 (LL), K267, G289, and Q298.

The protein belongs to the ThiI family.

It localises to the cytoplasm. The catalysed reaction is [ThiI sulfur-carrier protein]-S-sulfanyl-L-cysteine + a uridine in tRNA + 2 reduced [2Fe-2S]-[ferredoxin] + ATP + H(+) = [ThiI sulfur-carrier protein]-L-cysteine + a 4-thiouridine in tRNA + 2 oxidized [2Fe-2S]-[ferredoxin] + AMP + diphosphate. It catalyses the reaction [ThiS sulfur-carrier protein]-C-terminal Gly-Gly-AMP + S-sulfanyl-L-cysteinyl-[cysteine desulfurase] + AH2 = [ThiS sulfur-carrier protein]-C-terminal-Gly-aminoethanethioate + L-cysteinyl-[cysteine desulfurase] + A + AMP + 2 H(+). It functions in the pathway cofactor biosynthesis; thiamine diphosphate biosynthesis. Catalyzes the ATP-dependent transfer of a sulfur to tRNA to produce 4-thiouridine in position 8 of tRNAs, which functions as a near-UV photosensor. Also catalyzes the transfer of sulfur to the sulfur carrier protein ThiS, forming ThiS-thiocarboxylate. This is a step in the synthesis of thiazole, in the thiamine biosynthesis pathway. The sulfur is donated as persulfide by IscS. The protein is Probable tRNA sulfurtransferase of Methanothermobacter thermautotrophicus (strain ATCC 29096 / DSM 1053 / JCM 10044 / NBRC 100330 / Delta H) (Methanobacterium thermoautotrophicum).